The sequence spans 838 residues: Urease (838 aa).

In terms of domain architecture, Urease spans 400–838; it reads GAIDCHVHFI…VPLSRNYFLF (439 aa). Positions 405, 407, and 488 each coordinate Ni(2+). K488 bears the N6-carboxylysine mark. Position 490 (H490) interacts with substrate. The Ni(2+) site is built by H517 and H543. The Proton donor role is filled by H591. Ni(2+) is bound at residue D631.

In the C-terminal section; belongs to the metallo-dependent hydrolases superfamily. Urease alpha subunit family. As to quaternary structure, homohexamer. Other oligomeric forms may exist depending on pH and presence of salts. Ni(2+) serves as cofactor. In terms of processing, carboxylation allows a single lysine to coordinate two nickel ions.

The catalysed reaction is urea + 2 H2O + H(+) = hydrogencarbonate + 2 NH4(+). It functions in the pathway nitrogen metabolism; urea degradation; CO(2) and NH(3) from urea (urease route): step 1/1. With respect to regulation, requires the three urease accessory proteins URED, UREF AND UREG for its activation. Its function is as follows. Urea hydrolase involved in nitrogen recycling from ureide, purine, and arginine catabolism. The chain is Urease from Arabidopsis thaliana (Mouse-ear cress).